A 795-amino-acid polypeptide reads, in one-letter code: Phenylalanine--tRNA ligase beta subunit (795 aa).

Residues 39–148 (AGTFNGVVVG…LDAPIGTDLR (110 aa)) form the tRNA-binding domain. Residues 401-476 (PKVNTVQLRR…RIYGYNSIPN (76 aa)) form the B5 domain. The Mg(2+) site is built by D454, D460, E463, and E464. Residues 701–794 (SKFPANRRDL…VKQRFNAELR (94 aa)) form the FDX-ACB domain.

This sequence belongs to the phenylalanyl-tRNA synthetase beta subunit family. Type 1 subfamily. In terms of assembly, tetramer of two alpha and two beta subunits. Mg(2+) is required as a cofactor.

Its subcellular location is the cytoplasm. It carries out the reaction tRNA(Phe) + L-phenylalanine + ATP = L-phenylalanyl-tRNA(Phe) + AMP + diphosphate + H(+). The polypeptide is Phenylalanine--tRNA ligase beta subunit (pheT) (Haemophilus influenzae (strain ATCC 51907 / DSM 11121 / KW20 / Rd)).